We begin with the raw amino-acid sequence, 160 residues long: SsrA-binding protein (160 aa).

Belongs to the SmpB family.

Its subcellular location is the cytoplasm. In terms of biological role, required for rescue of stalled ribosomes mediated by trans-translation. Binds to transfer-messenger RNA (tmRNA), required for stable association of tmRNA with ribosomes. tmRNA and SmpB together mimic tRNA shape, replacing the anticodon stem-loop with SmpB. tmRNA is encoded by the ssrA gene; the 2 termini fold to resemble tRNA(Ala) and it encodes a 'tag peptide', a short internal open reading frame. During trans-translation Ala-aminoacylated tmRNA acts like a tRNA, entering the A-site of stalled ribosomes, displacing the stalled mRNA. The ribosome then switches to translate the ORF on the tmRNA; the nascent peptide is terminated with the 'tag peptide' encoded by the tmRNA and targeted for degradation. The ribosome is freed to recommence translation, which seems to be the essential function of trans-translation. This chain is SsrA-binding protein, found in Mycobacterium leprae (strain Br4923).